The sequence spans 145 residues: Leptin (145 aa).

The signal sequence occupies residues 1 to 12; that stretch reads LWLWPYLFFIEA.

The protein belongs to the leptin family.

It is found in the secreted. Key player in the regulation of energy balance and body weight control. Once released into the circulation, has central and peripheral effects by binding LEPR, found in many tissues, which results in the activation of several major signaling pathways. In the hypothalamus, acts as an appetite-regulating factor that induces a decrease in food intake and an increase in energy consumption by inducing anorexinogenic factors and suppressing orexigenic neuropeptides, also regulates bone mass and secretion of hypothalamo-pituitary-adrenal hormones. In the periphery, increases basal metabolism, influences reproductive function, regulates pancreatic beta-cell function and insulin secretion, is pro-angiogenic for endothelial cell and affects innate and adaptive immunity. In the arcuate nucleus of the hypothalamus, activates by depolarization POMC neurons inducing FOS and SOCS3 expression to release anorexigenic peptides and inhibits by hyperpolarization NPY neurons inducing SOCS3 with a consequent reduction on release of orexigenic peptides. In addition to its known satiety inducing effect, has a modulatory role in nutrient absorption. In the intestine, reduces glucose absorption by enterocytes by activating PKC and leading to a sequential activation of p38, PI3K and ERK signaling pathways which exerts an inhibitory effect on glucose absorption. Acts as a growth factor on certain tissues, through the activation of different signaling pathways increases expression of genes involved in cell cycle regulation such as CCND1, via JAK2-STAT3 pathway, or VEGFA, via MAPK1/3 and PI3K-AKT1 pathways. May also play an apoptotic role via JAK2-STAT3 pathway and up-regulation of BIRC5 expression. Pro-angiogenic, has mitogenic activity on vascular endothelial cells and plays a role in matrix remodeling by regulating the expression of matrix metalloproteinases (MMPs) and tissue inhibitors of metalloproteinases (TIMPs). In innate immunity, modulates the activity and function of neutrophils by increasing chemotaxis and the secretion of oxygen radicals. Increases phagocytosis by macrophages and enhances secretion of pro-inflammatory mediators. Increases cytotoxic ability of NK cells. Plays a pro-inflammatory role, in synergy with IL1B, by inducing NOS2 which promotes the production of IL6, IL8 and Prostaglandin E2, through a signaling pathway that involves JAK2, PI3K, MAP2K1/MEK1 and MAPK14/p38. In adaptive immunity, promotes the switch of memory T-cells towards T helper-1 cell immune responses. Increases CD4(+)CD25(-) T-cell proliferation and reduces autophagy during TCR (T-cell receptor) stimulation, through MTOR signaling pathway activation and BCL2 up-regulation. This is Leptin (LEP) from Equus caballus (Horse).